Reading from the N-terminus, the 614-residue chain is MNKIHLLDEKTINKISAGEVVERPASIVKELIENSIDAGSKNITVEILEGGIPYIKVSDDGCGMNEIDAILAFERHATSKIKSDNDLYSIGTLGFRGEALASIAAVSHVTLQTKEEGALFGTKVVVEGGKVVEKTTCGCAKGCSIEVRDVFFNTPARRKFLKRPSTESMYITDVVTKLCLSHPEVSFKYVKDRKLQFITSGNGNIEDVILRLFGNEVYSSLMSASFESEDLKLKILAGKNSLNYSNRNMQFFYVNGRYVKNKTLSAAVDEAFKTYIPVNRYPAVFLYMEIDPRQIDVNIHPSKLEIKFSDERRIFEAVYKTIKDSLHKYNLIPEVKIEEKKNIFEIETPTISAEQTKLYFTSSDKEVEKEKKKFDNEFKGKNVFLKDNVLKENSKNSSLDNHLAVYEEYEHEKEEINKNDLAKKISDIRIVGTLFSTYIIVEKEDVFYIIDQHAAHERILYEKFTSQYEKIQTRQVTFPIVVELQPRDLELVHQEKELLNKLGYVFEEFGNNSIILREVPVILGQPEARQLFIDIVEKLKDKELVNKISLKEENIIMMACKAAVKAMDNLSEKEINKLFDDLKITENPYTCPHGRPVIIAITKTQLEKMFKRIM.

The protein belongs to the DNA mismatch repair MutL/HexB family.

Functionally, this protein is involved in the repair of mismatches in DNA. It is required for dam-dependent methyl-directed DNA mismatch repair. May act as a 'molecular matchmaker', a protein that promotes the formation of a stable complex between two or more DNA-binding proteins in an ATP-dependent manner without itself being part of a final effector complex. This Thermoanaerobacter pseudethanolicus (strain ATCC 33223 / 39E) (Clostridium thermohydrosulfuricum) protein is DNA mismatch repair protein MutL.